We begin with the raw amino-acid sequence, 85 residues long: Large ribosomal subunit protein bL31B (85 aa).

This sequence belongs to the bacterial ribosomal protein bL31 family. Type B subfamily. As to quaternary structure, part of the 50S ribosomal subunit.

The polypeptide is Large ribosomal subunit protein bL31B (Pseudomonas entomophila (strain L48)).